The primary structure comprises 160 residues: Cytochrome b6-f complex subunit 4 (160 aa).

The Cytoplasmic segment spans residues 1–35 (MATLKKPDLSDPKLRAKLAKGMGHNYYGEPAWPND). A helical membrane pass occupies residues 36 to 56 (LLYVFPVVIMGTFACIVALSV). Residues 57–94 (LDPAMVGEPADPFATPLEILPEWYLYPVFQILRSVPNK) lie on the Lumenal, thylakoid side of the membrane. A helical transmembrane segment spans residues 95–115 (LLGVLLMASVPLGLILVPFIE). Over 116–130 (NVNKFQNPFRRPVAT) the chain is Cytoplasmic. Residues 131–151 (TIFLFGTLVTIWLGIGATFPL) form a helical membrane-spanning segment. Over 152–160 (DKTLTLGLF) the chain is Lumenal, thylakoid.

This sequence belongs to the cytochrome b family. PetD subfamily. The 4 large subunits of the cytochrome b6-f complex are cytochrome b6, subunit IV (17 kDa polypeptide, PetD), cytochrome f and the Rieske protein, while the 4 small subunits are PetG, PetL, PetM and PetN. The complex functions as a dimer.

Its subcellular location is the cellular thylakoid membrane. Functionally, component of the cytochrome b6-f complex, which mediates electron transfer between photosystem II (PSII) and photosystem I (PSI), cyclic electron flow around PSI, and state transitions. This chain is Cytochrome b6-f complex subunit 4, found in Mastigocladus laminosus (Fischerella sp.).